Consider the following 442-residue polypeptide: HTH-type transcriptional regulator NorG (442 aa).

An HTH gntR-type domain is found at Lys2 to Tyr46. The H-T-H motif DNA-binding region spans Gln6–Glu25. Lys288 is modified (N6-(pyridoxal phosphate)lysine).

This sequence in the C-terminal section; belongs to the class-I pyridoxal-phosphate-dependent aminotransferase family. It depends on pyridoxal 5'-phosphate as a cofactor.

Positively regulates the expression of the NorB efflux pump and negatively regulates the expression of the AbcA efflux pump. Binds specifically to the promoters of norA, norB and norC and abcA genes. Could also have an aminotransferase activity. This Staphylococcus aureus (strain bovine RF122 / ET3-1) protein is HTH-type transcriptional regulator NorG (norG).